The following is a 179-amino-acid chain: uncharacterized protein (179 aa).

This is an uncharacterized protein from Bacillus subtilis (strain 168).